Consider the following 358-residue polypeptide: UDP-N-acetylglucosamine--N-acetylmuramyl-(pentapeptide) pyrophosphoryl-undecaprenol N-acetylglucosamine transferase (358 aa).

Residues 13–15 (TGG), Asn-125, Arg-162, Ser-190, Ile-244, 263–268 (ALTVAE), and Gln-289 each bind UDP-N-acetyl-alpha-D-glucosamine.

This sequence belongs to the glycosyltransferase 28 family. MurG subfamily.

The protein localises to the cell inner membrane. It carries out the reaction di-trans,octa-cis-undecaprenyl diphospho-N-acetyl-alpha-D-muramoyl-L-alanyl-D-glutamyl-meso-2,6-diaminopimeloyl-D-alanyl-D-alanine + UDP-N-acetyl-alpha-D-glucosamine = di-trans,octa-cis-undecaprenyl diphospho-[N-acetyl-alpha-D-glucosaminyl-(1-&gt;4)]-N-acetyl-alpha-D-muramoyl-L-alanyl-D-glutamyl-meso-2,6-diaminopimeloyl-D-alanyl-D-alanine + UDP + H(+). It functions in the pathway cell wall biogenesis; peptidoglycan biosynthesis. Cell wall formation. Catalyzes the transfer of a GlcNAc subunit on undecaprenyl-pyrophosphoryl-MurNAc-pentapeptide (lipid intermediate I) to form undecaprenyl-pyrophosphoryl-MurNAc-(pentapeptide)GlcNAc (lipid intermediate II). This is UDP-N-acetylglucosamine--N-acetylmuramyl-(pentapeptide) pyrophosphoryl-undecaprenol N-acetylglucosamine transferase from Halorhodospira halophila (strain DSM 244 / SL1) (Ectothiorhodospira halophila (strain DSM 244 / SL1)).